The primary structure comprises 490 residues: ATP-dependent 6-phosphofructokinase (490 aa).

ATP contacts are provided by residues G109, 175 to 176 (RG), and 200 to 203 (GDGT). D201 is a binding site for Mg(2+). Substrate contacts are provided by residues 229 to 231 (TID), 274 to 276 (MGR), E327, and 383 to 386 (YMIR). Catalysis depends on D231, which acts as the Proton acceptor. Positions 488 to 490 (SKL) match the Peroxisomal targeting signal motif.

It belongs to the phosphofructokinase type A (PFKA) family. PPi-dependent PFK group II subfamily. Atypical ATP-dependent clade 'X' sub-subfamily. Homotetramer. Mg(2+) is required as a cofactor.

It localises to the glycosome. It catalyses the reaction beta-D-fructose 6-phosphate + ATP = beta-D-fructose 1,6-bisphosphate + ADP + H(+). It functions in the pathway carbohydrate degradation; glycolysis; D-glyceraldehyde 3-phosphate and glycerone phosphate from D-glucose: step 3/4. Its activity is regulated as follows. Allosterically activated by AMP. Functionally, catalyzes the phosphorylation of D-fructose 6-phosphate to fructose 1,6-bisphosphate by ATP, the first committing step of glycolysis. This is ATP-dependent 6-phosphofructokinase from Trypanoplasma borreli.